The following is a 330-amino-acid chain: MADTSSRTDVSTDGDTDHRDLGSDRGHMHAAASDSSDRSKDKLDQKTLRRLAQNREAARKSRLRKKAYVQQLENSRLKLTQLEQELQRARQQGVFISSSGDQAHSTGGNGALAFDAEHSRWLEEKNRQMNELRSALNAHAGDTELRIIVDGVMAHYEELFRIKSNAAKNDVFHLLSGMWKTPAERCFLWLGGFRSSELLKLLANQLEPMTERQVMGINSLQQTSQQAEDALSQGMESLQQSLADTLSSGTLGSSSSDNVASYMGQMAMAMGQLGTLEGFIRQADNLRLQTLQQMLRVLTTRQSARALLAIHDYSSRLRALSSLWLARPRE.

Positions 1–13 (MADTSSRTDVSTD) are enriched in polar residues. Positions 1–45 (MADTSSRTDVSTDGDTDHRDLGSDRGHMHAAASDSSDRSKDKLDQ) are disordered. 2 stretches are compositionally biased toward basic and acidic residues: residues 15–27 (DTDH…DRGH) and 35–45 (SSDRSKDKLDQ). Residues 44-107 (DQKTLRRLAQ…SSGDQAHSTG (64 aa)) form the bZIP domain. Coiled-coil stretches lie at residues 45–142 (QKTL…HAGD) and 217–233 (INSL…ALSQ). The basic motif stretch occupies residues 46-66 (KTLRRLAQNREAARKSRLRKK). Positions 72–86 (LENSRLKLTQLEQEL) are leucine-zipper. Residues 111-327 (ALAFDAEHSR…RALSSLWLAR (217 aa)) enclose the DOG1 domain.

The protein belongs to the bZIP family. Binds DNA as a dimer. Interacts with NPR1, NPR3 and NPR4. Interacts with GRXC9/GRX480. In terms of tissue distribution, expressed predominantly in roots and flowers.

The protein resides in the nucleus. Transcriptional activator that binds specifically to the DNA sequence 5'-TGACG-3'. Recognizes ocs elements like the as-1 motif of the cauliflower mosaic virus 35S promoter. Binding to the as-1-like cis elements mediate auxin- and salicylic acid-inducible transcription. May be involved in the induction of the systemic acquired resistance (SAR) via its interaction with NPR1. Could also bind to the Hex-motif (5'-TGACGTGG-3') another cis-acting element found in plant histone promoters. The sequence is that of Transcription factor TGA6 (TGA6) from Arabidopsis thaliana (Mouse-ear cress).